The following is a 390-amino-acid chain: Phosphoglycerate kinase (390 aa).

Substrate is bound by residues 21-23, Arg36, 59-62, Arg114, and Arg147; these read DLN and HLGR. Residues Lys198, Glu314, and 340–343 each bind ATP; that span reads GGDT.

The protein belongs to the phosphoglycerate kinase family. Monomer.

Its subcellular location is the cytoplasm. The enzyme catalyses (2R)-3-phosphoglycerate + ATP = (2R)-3-phospho-glyceroyl phosphate + ADP. It participates in carbohydrate degradation; glycolysis; pyruvate from D-glyceraldehyde 3-phosphate: step 2/5. The protein is Phosphoglycerate kinase (pgk) of Buchnera aphidicola subsp. Acyrthosiphon pisum (strain APS) (Acyrthosiphon pisum symbiotic bacterium).